We begin with the raw amino-acid sequence, 347 residues long: UDP-N-acetylenolpyruvoylglucosamine reductase (347 aa).

The FAD-binding PCMH-type domain maps to 16 to 187; it reads AIEQCSHYLV…IAVGLKLPKT (172 aa). Arginine 163 is an active-site residue. Serine 233 acts as the Proton donor in catalysis. The active site involves glutamate 328.

Belongs to the MurB family. The cofactor is FAD.

The protein localises to the cytoplasm. It carries out the reaction UDP-N-acetyl-alpha-D-muramate + NADP(+) = UDP-N-acetyl-3-O-(1-carboxyvinyl)-alpha-D-glucosamine + NADPH + H(+). It functions in the pathway cell wall biogenesis; peptidoglycan biosynthesis. In terms of biological role, cell wall formation. The protein is UDP-N-acetylenolpyruvoylglucosamine reductase of Vibrio vulnificus (strain CMCP6).